Reading from the N-terminus, the 148-residue chain is Snaclec 4 (148 aa).

The signal sequence occupies residues 1–23; that stretch reads MGRFIFVSFSLLVVFFSLSGTEA. One can recognise a C-type lectin domain in the interval 34–148; the sequence is YDQNCYKAFE…DTQFRLQEPG (115 aa).

It belongs to the snaclec family. Heterodimer; disulfide-linked. Contains disulfide bonds. Expressed by the venom gland.

It is found in the secreted. Functionally, interferes with one step of hemostasis (modulation of platelet aggregation, or coagulation cascade, for example). This is Snaclec 4 from Echis pyramidum leakeyi (Leakey's carpet viper).